Reading from the N-terminus, the 360-residue chain is DNA replication and repair protein RecF (360 aa).

33-40 (GENGSGKT) contacts ATP.

This sequence belongs to the RecF family.

Its subcellular location is the cytoplasm. The RecF protein is involved in DNA metabolism; it is required for DNA replication and normal SOS inducibility. RecF binds preferentially to single-stranded, linear DNA. It also seems to bind ATP. The sequence is that of DNA replication and repair protein RecF from Rickettsia typhi (strain ATCC VR-144 / Wilmington).